The chain runs to 137 residues: Nucleoside diphosphate kinase (137 aa).

Residues K9, F57, R85, T91, R102, and N112 each coordinate ATP. H115 serves as the catalytic Pros-phosphohistidine intermediate.

This sequence belongs to the NDK family. In terms of assembly, homotetramer. The cofactor is Mg(2+).

It is found in the cytoplasm. It carries out the reaction a 2'-deoxyribonucleoside 5'-diphosphate + ATP = a 2'-deoxyribonucleoside 5'-triphosphate + ADP. It catalyses the reaction a ribonucleoside 5'-diphosphate + ATP = a ribonucleoside 5'-triphosphate + ADP. Its function is as follows. Major role in the synthesis of nucleoside triphosphates other than ATP. The ATP gamma phosphate is transferred to the NDP beta phosphate via a ping-pong mechanism, using a phosphorylated active-site intermediate. This Leptospira biflexa serovar Patoc (strain Patoc 1 / ATCC 23582 / Paris) protein is Nucleoside diphosphate kinase.